The sequence spans 122 residues: Large ribosomal subunit protein uL14 (122 aa).

The protein belongs to the universal ribosomal protein uL14 family. Part of the 50S ribosomal subunit. Forms a cluster with proteins L3 and L19. In the 70S ribosome, L14 and L19 interact and together make contacts with the 16S rRNA in bridges B5 and B8.

Functionally, binds to 23S rRNA. Forms part of two intersubunit bridges in the 70S ribosome. The chain is Large ribosomal subunit protein uL14 from Azoarcus sp. (strain BH72).